Consider the following 770-residue polypeptide: Transcription activator AMTR1 (770 aa).

The segment at residues 7-34 (CLTCRQRKLKCDEKKPVCRQCAKASREC) is a DNA-binding region (zn(2)-C6 fungal-type).

It localises to the nucleus. Its function is as follows. Transcription factor that regulates the expression of the gene clusters that mediate the biosynthesis of AM-toxins, host-selective toxins (HSTs) causing Alternaria blotch on apple, a worldwide distributed disease. AM-toxins have two target sites for affecting susceptible apple cells; they cause invagination of the plasma membrane and electrolyte loss and chloroplast disorganization. This chain is Transcription activator AMTR1, found in Alternaria alternata (Alternaria rot fungus).